Consider the following 311-residue polypeptide: MSQNQEISKKEQYNLNKLQKRLRRNVGEAIADFNMIEEGDRIMVCLSGGKDSYTMLEILRNLQQSAPINFSLVAVNLDQKQPGFPEHVLPEYLEKLGVEYKIVEENTYGIVKEKIPEGKTTCSLCSRLRRGILYRTATELGTTKIALGHHRDDILQTLFLNMFYGGKMKGMPPKLMSDDGKHIVIRPLAYCREKDIQRFADAKAFPIIPCNLCGSQPNLQRQVIADMLRDWDKRYPGRIETMFSAMQNVVPSHLCDTNLFDFKGITHGSEVVNGGDLAFDREEIPLQPAGWQPEEDENQLDELRLNVVEVK.

Positions 47–52 match the PP-loop motif motif; it reads SGGKDS. Residues cysteine 122, cysteine 125, and cysteine 213 each contribute to the [4Fe-4S] cluster site.

This sequence belongs to the TtcA family. As to quaternary structure, homodimer. It depends on Mg(2+) as a cofactor. The cofactor is [4Fe-4S] cluster.

It is found in the cytoplasm. It catalyses the reaction cytidine(32) in tRNA + S-sulfanyl-L-cysteinyl-[cysteine desulfurase] + AH2 + ATP = 2-thiocytidine(32) in tRNA + L-cysteinyl-[cysteine desulfurase] + A + AMP + diphosphate + H(+). It participates in tRNA modification. Its function is as follows. Catalyzes the ATP-dependent 2-thiolation of cytidine in position 32 of tRNA, to form 2-thiocytidine (s(2)C32). The sulfur atoms are provided by the cysteine/cysteine desulfurase (IscS) system. This is tRNA-cytidine(32) 2-sulfurtransferase from Shigella flexneri serotype 5b (strain 8401).